The primary structure comprises 511 residues: GMP synthase [glutamine-hydrolyzing] (511 aa).

The 191-residue stretch at 5-195 folds into the Glutamine amidotransferase type-1 domain; the sequence is DILVLDFGSQ…AKYACNCESV (191 aa). The Nucleophile role is filled by C82. Catalysis depends on residues H169 and E171. The GMPS ATP-PPase domain occupies 196–386; the sequence is WNMGSFAKTQ…LGLSKEVVYR (191 aa). 223 to 229 is an ATP binding site; sequence SGGVDSS.

In terms of assembly, homodimer.

The enzyme catalyses XMP + L-glutamine + ATP + H2O = GMP + L-glutamate + AMP + diphosphate + 2 H(+). Its pathway is purine metabolism; GMP biosynthesis; GMP from XMP (L-Gln route): step 1/1. In terms of biological role, catalyzes the synthesis of GMP from XMP. The protein is GMP synthase [glutamine-hydrolyzing] of Campylobacter jejuni subsp. jejuni serotype O:23/36 (strain 81-176).